A 278-amino-acid chain; its full sequence is Putative phosphatase MG265 (278 aa).

The Nucleophile role is filled by D9. D9 is a Mg(2+) binding site. Position 10 (L10) interacts with phosphate. D11 serves as a coordination point for Mg(2+). Phosphate contacts are provided by residues 43–44 (SG) and K204. D227 serves as a coordination point for Mg(2+). Phosphate is bound at residue N230.

The protein belongs to the HAD-like hydrolase superfamily. Cof family. Mg(2+) serves as cofactor.

The protein is Putative phosphatase MG265 of Mycoplasma genitalium (strain ATCC 33530 / DSM 19775 / NCTC 10195 / G37) (Mycoplasmoides genitalium).